Here is a 1071-residue protein sequence, read N- to C-terminus: MTSPAKFKKDKEIIAEYDTQVKEIRAQLTEQMKCLDQQCELRVQLLQDLQDFFRKKAEIEMDYSRNLEKLAERFLAKTRSTKDQQFKKDQNVLSPVNCWNLLLNQVKRESRDHTTLSDIYLNNIIPRFVQVSEDSGRLFKKSKEVGQQLQDDLMKVLNELYSVMKTYHMYNADSISAQSKLKEAEKQEEKQIGKSVKQEDRQTPRSPDSTANVRIEEKHVRRSSVKKIEKMKEKRQAKYTENKLKAIKARNEYLLALEATNASVFKYYIHDLSDLIDQCCDLGYHASLNRALRTFLSAELNLEQSKHEGLDAIENAVENLDATSDKQRLMEMYNNVFCPPMKFEFQPHMGDMASQLCAQQPVQSELVQRCQQLQSRLSTLKIENEEVKKTMEATLQTIQDIVTVEDFDVSDCFQYSNSMESVKSTVSETFMSKPSIAKRRANQQETEQFYFTKMKEYLEGRNLITKLQAKHDLLQKTLGESQRTDCSLARRSSTVRKQDSSQAIPLVVESCIRFISRHGLQHEGIFRVSGSQVEVNDIKNAFERGEDPLAGDQNDHDMDSIAGVLKLYFRGLEHPLFPKDIFHDLMACVTMDNLQERALHIRKVLLVLPKTTLIIMRYLFAFLNHLSQFSEENMMDPYNLAICFGPSLMSVPEGHDQVSCQAHVNELIKTIIIQHENIFPSPRELEGPVYSRGGSMEDYCDSPHGETTSVEDSTQDVTAEHHTSDDECEPIEAIAKFDYVGRTARELSFKKGASLLLYQRASDDWWEGRHNGIDGLIPHQYIVVQDTEDGVVERSSPKSEIEVISEPPEEKVTARAGASCPSGGHVADIYLANINKQRKRPESGSIRKTFRSDSHGLSSSLTDSSSPGVGASCRPSSQPIMSQSLPKEGPDKCSISGHGSLNSISRHSSLKNRLDSPQIRKTATAGRSKSFNNHRPMDPEVIAQDIEATMNSALNELRELERQSSVKHTPDVVLDTLEPLKTSPVVAPTSEPSSPLHTQLLKDPEPAFQRSASTAGDIACAFRPVKSVKMAAPVKPPATRPKPTVFPKTNATSPGVNSSTSPQSTDKSCTV.

The F-BAR domain occupies 22–325; it reads KEIRAQLTEQ…AVENLDATSD (304 aa). Over residues 181–203 the composition is skewed to basic and acidic residues; it reads LKEAEKQEEKQIGKSVKQEDRQT. Residues 181-211 form a disordered region; it reads LKEAEKQEEKQIGKSVKQEDRQTPRSPDSTA. A Phosphoserine modification is found at S206. A coiled-coil region spans residues 362–401; the sequence is VQSELVQRCQQLQSRLSTLKIENEEVKKTMEATLQTIQDI. 4 positions are modified to phosphoserine: S427, S500, S691, and S695. The Rho-GAP domain occupies 489–679; sequence ARRSSTVRKQ…TIIIQHENIF (191 aa). Positions 698-726 are disordered; the sequence is DYCDSPHGETTSVEDSTQDVTAEHHTSDD. Over residues 705-717 the composition is skewed to polar residues; sequence GETTSVEDSTQDV. At S724 the chain carries Phosphoserine. An SH3 domain is found at 728–787; sequence CEPIEAIAKFDYVGRTARELSFKKGASLLLYQRASDDWWEGRHNGIDGLIPHQYIVVQDT. The residue at position 795 (S795) is a Phosphoserine. Residues 837–936 form a disordered region; that stretch reads QRKRPESGSI…RSKSFNNHRP (100 aa). Residues 855–866 are compositionally biased toward low complexity; it reads HGLSSSLTDSSS. Polar residues-rich tracts occupy residues 874 to 885 and 897 to 907; these read RPSSQPIMSQSL and GHGSLNSISRH. Phosphoserine is present on S916. Over residues 919-933 the composition is skewed to polar residues; that stretch reads IRKTATAGRSKSFNN. Symmetric dimethylarginine; by PRMT5 is present on R927. Residue S930 is modified to Phosphoserine. The stretch at 940-967 forms a coiled coil; the sequence is EVIAQDIEATMNSALNELRELERQSSVK. Positions 983-1012 are disordered; sequence SPVVAPTSEPSSPLHTQLLKDPEPAFQRSA. Residues S990, S994, S1013, and S1027 each carry the phosphoserine modification. The tract at residues 1029 to 1071 is disordered; the sequence is KMAAPVKPPATRPKPTVFPKTNATSPGVNSSTSPQSTDKSCTV. Over residues 1047–1071 the composition is skewed to polar residues; that stretch reads PKTNATSPGVNSSTSPQSTDKSCTV.

Homodimer. Heterodimer; forms a heterodimer with SRGAP2C, altering SRGAP2 function. Forms a heterooligomer with SRGAP1 and SRGAP3 through its F-BAR domain. Interacts (via SH3 domain) with GPHN. Interacts (via SH3 domain) with FMNL1 (activated by RAC1); regulates the actin filament severing activity of FMNL1 and actin dynamics. Interacts (via SH3 domain) with FMNL3. Interacts with RAC1; specifically stimulates RAC1 GTPase activity. Interacts (via F-BAR domain) with HOMER1. Interacts with ROBO1 and ROBO2. Interacts with FASLG. Interacts with PRMT5. In terms of processing, methylation at Arg-927 is required for the stimulation of cell migration, dimerization and localization at the plasma membrane protrusions.

Its subcellular location is the cell membrane. It localises to the cell projection. The protein localises to the dendritic spine. It is found in the postsynaptic density. The protein resides in the postsynaptic cell membrane. Its subcellular location is the lamellipodium. It localises to the cytoplasmic vesicle. The protein localises to the phagosome. It is found in the nucleus. The protein resides in the cytoplasm. Its subcellular location is the cytosol. With respect to regulation, activity is strongly inhibited by SRGAP2C, which heterodimerize with SRGAP2/SRGAP2A, thereby reducing SRGAP2/SRGAP2A levels through proteasome-dependent degradation. Its function is as follows. Postsynaptic RAC1 GTPase activating protein (GAP) that plays a key role in neuronal morphogenesis and migration mainly during development of the cerebral cortex. Regulates excitatory and inhibitory synapse maturation and density in cortical pyramidal neurons. SRGAP2/SRGAP2A limits excitatory and inhibitory synapse density through its RAC1-specific GTPase activating activity, while it promotes maturation of both excitatory and inhibitory synapses through its ability to bind to the postsynaptic scaffolding protein HOMER1 at excitatory synapses, and the postsynaptic protein GPHN at inhibitory synapses. Mechanistically, acts by binding and deforming membranes, thereby regulating actin dynamics to regulate cell migration and differentiation. Promotes cell repulsion and contact inhibition of locomotion: localizes to protrusions with curved edges and controls the duration of RAC1 activity in contact protrusions. In non-neuronal cells, may also play a role in cell migration by regulating the formation of lamellipodia and filopodia. The chain is SLIT-ROBO Rho GTPase-activating protein 2 from Homo sapiens (Human).